The chain runs to 539 residues: uncharacterized protein (539 aa).

A run of 5 helical transmembrane segments spans residues 4 to 22 (LVENQLLALVVIMTVGLLL), 27 to 46 (IFGFRLGVAAVLFVGLALST), 56 to 78 (LIYVVGLSLFVYTIGLEAGPGFF), 90 to 112 (ALTLGAIIATTALAWALITVLNI), and 155 to 177 (PVVAYSLAYPLGVLIVILSIAIF). 2 RCK C-terminal domains span residues 187-269 (KEAE…AIGE) and 271-352 (IDGD…LLGD). Helical transmembrane passes span 360-382 (FNLLPLAAGLMIGVLVGMVEFPL), 422-444 (LALRQLGITLFLAAIGTSAGAGF), 453-475 (SLTIIGFGALLTLFISITVLFVG), and 516-538 (YTSVYPLAMIAKILAAQTLLFLL).

This sequence belongs to the AAE transporter (TC 2.A.81) family.

The protein localises to the cell membrane. This is an uncharacterized protein from Corynebacterium glutamicum (strain ATCC 13032 / DSM 20300 / JCM 1318 / BCRC 11384 / CCUG 27702 / LMG 3730 / NBRC 12168 / NCIMB 10025 / NRRL B-2784 / 534).